A 374-amino-acid polypeptide reads, in one-letter code: Guanine nucleotide-binding protein subunit alpha-15 (374 aa).

The 334-residue stretch at 41–374 (GELKLLLLGT…ARYLDEINLL (334 aa)) folds into the G-alpha domain. Positions 44-57 (KLLLLGTGESGKST) are G1 motif. GTP contacts are provided by residues 49–56 (GTGESGKS), 183–189 (LRSRMPT), 208–212 (DVGGQ), 277–280 (NKTD), and Ala-346. Ser-56 and Thr-189 together coordinate Mg(2+). The interval 181 to 189 (DVLRSRMPT) is G2 motif. The G3 motif stretch occupies residues 204–213 (LRIVDVGGQK). The G4 motif stretch occupies residues 273–280 (ILFLNKTD). The G5 motif stretch occupies residues 344–349 (TCATDT).

It belongs to the G-alpha family. G(q) subfamily. G proteins are composed of 3 units; alpha, beta and gamma. The alpha chain contains the guanine nucleotide binding site.

Functionally, guanine nucleotide-binding proteins (G proteins) are involved as modulators or transducers in various transmembrane signaling systems. The chain is Guanine nucleotide-binding protein subunit alpha-15 (GNA15) from Oryctolagus cuniculus (Rabbit).